A 297-amino-acid polypeptide reads, in one-letter code: Large ribosomal subunit protein uL15m (297 aa).

The N-terminal 22 residues, 1-22, are a transit peptide targeting the mitochondrion; it reads MAGPVRGAAGPWALDLLRALPR. The disordered stretch occupies residues 27-68; the sequence is NLRPNPGSRKPERRRRGQRRGRKCGRGHKGERQRGTRPRLGF. Residues 37–53 show a composition bias toward basic residues; sequence PERRRRGQRRGRKCGRG.

Belongs to the universal ribosomal protein uL15 family. In terms of assembly, component of the mitochondrial ribosome large subunit (39S) which comprises a 16S rRNA and about 50 distinct proteins.

It localises to the mitochondrion. The polypeptide is Large ribosomal subunit protein uL15m (MRPL15) (Bos taurus (Bovine)).